A 78-amino-acid chain; its full sequence is UPF0270 protein YE3952 (78 aa).

It belongs to the UPF0270 family.

The chain is UPF0270 protein YE3952 from Yersinia enterocolitica serotype O:8 / biotype 1B (strain NCTC 13174 / 8081).